The sequence spans 341 residues: Glyceraldehyde-3-phosphate dehydrogenase 2 (341 aa).

NAD(+) contacts are provided by residues 12–13 (RI), Arg78, and Thr120. D-glyceraldehyde 3-phosphate is bound by residues 152–154 (SCT) and Thr183. Residue Cys153 is the Nucleophile of the active site. Residue Asn184 participates in NAD(+) binding. Residues Arg198, 211-212 (TG), and Arg234 contribute to the D-glyceraldehyde 3-phosphate site. Asn313 lines the NAD(+) pocket.

It belongs to the glyceraldehyde-3-phosphate dehydrogenase family. In terms of assembly, homotetramer.

The protein localises to the cytoplasm. It catalyses the reaction D-glyceraldehyde 3-phosphate + phosphate + NAD(+) = (2R)-3-phospho-glyceroyl phosphate + NADH + H(+). Its pathway is carbohydrate degradation; glycolysis; pyruvate from D-glyceraldehyde 3-phosphate: step 1/5. Functionally, catalyzes the oxidative phosphorylation of glyceraldehyde 3-phosphate (G3P) to 1,3-bisphosphoglycerate (BPG) using the cofactor NAD. The first reaction step involves the formation of a hemiacetal intermediate between G3P and a cysteine residue, and this hemiacetal intermediate is then oxidized to a thioester, with concomitant reduction of NAD to NADH. The reduced NADH is then exchanged with the second NAD, and the thioester is attacked by a nucleophilic inorganic phosphate to produce BPG. The protein is Glyceraldehyde-3-phosphate dehydrogenase 2 (gapA2) of Staphylococcus epidermidis (strain ATCC 35984 / DSM 28319 / BCRC 17069 / CCUG 31568 / BM 3577 / RP62A).